A 196-amino-acid polypeptide reads, in one-letter code: FMN-dependent NADH:quinone oxidoreductase (196 aa).

Ser10 contacts FMN.

It belongs to the azoreductase type 1 family. Homodimer. FMN is required as a cofactor.

The catalysed reaction is 2 a quinone + NADH + H(+) = 2 a 1,4-benzosemiquinone + NAD(+). It carries out the reaction N,N-dimethyl-1,4-phenylenediamine + anthranilate + 2 NAD(+) = 2-(4-dimethylaminophenyl)diazenylbenzoate + 2 NADH + 2 H(+). Quinone reductase that provides resistance to thiol-specific stress caused by electrophilic quinones. In terms of biological role, also exhibits azoreductase activity. Catalyzes the reductive cleavage of the azo bond in aromatic azo compounds to the corresponding amines. This is FMN-dependent NADH:quinone oxidoreductase from Cereibacter sphaeroides (strain KD131 / KCTC 12085) (Rhodobacter sphaeroides).